A 385-amino-acid chain; its full sequence is MNPVPAQREYFLDSIRAWLMLLGIPFHISLIYSSHTWHVNSAEPSLWLTLFNDFIHSFRMQVFFVISGYFSYMLFLRYPLKKWWKVRVERVGIPMLTAIPLLTLPQFIMLQYVKGKAESWPGLSLYDKYNTLAWELISHLWFLLVLVVMTTLCVWIFKRIRNNLENSDKTNKKFSMVKLSVIFLCLGIGYAVIRRTIFIVYPPILSNGMFNFIVMQTLFYLPFFILGALAFIFPHLKTLFTTPSRGCTLAAALAFVAYLLNQRYGSGDAWMYETESVITMVLGLWMVNVVFSFGHRLLNFQSARVTYFVNASLFIYLVHHPLTLFFGAYITPHITSNWLGFLCGLIFVVGIAIILYEIHLRIPLLKFLFSGKPVVKRENDKAPAR.

Transmembrane regions (helical) follow at residues Ala-17–Trp-37, Met-60–Leu-80, Val-91–Gln-111, Ile-137–Phe-157, Lys-173–Ile-193, Phe-212–Ile-232, Leu-239–Leu-259, Thr-274–Gly-294, Ala-311–Thr-331, and Trp-338–Ile-358.

The protein belongs to the acyltransferase 3 family. OpgC subfamily.

The protein resides in the cell membrane. Its pathway is glycan metabolism; osmoregulated periplasmic glucan (OPG) biosynthesis. Its function is as follows. Necessary for the succinyl substitution of periplasmic glucans. Could catalyze the transfer of succinyl residues from the cytoplasmic side of the membrane to the nascent glucan backbones on the periplasmic side of the membrane. The chain is Glucans biosynthesis protein C from Escherichia coli O17:K52:H18 (strain UMN026 / ExPEC).